The sequence spans 264 residues: MKPTTIASLQKYKQDKKRFATITAYDYSFAKLFADEGLNVMLVGDSLGMTVQGHDSTLPVTVADIAYHTAAVRRGAPNCLLLADLPFMAYATPEQAFENAATVMRAGANMVKIEGGEWLVETVKMLTERAVPVCGHLGLTPQSVNIFGGYKVQGRGNEASDRLLSDALALEAAGAQLLVLECVPVELAKRITEALAIPVIGIGAGNVTDGQILVMHDAFGITGGHIPKFAKNFLAETGDIRAAVRQYMAEVESGVYPGEEHSFH.

Mg(2+)-binding residues include Asp-45 and Asp-84. Residues 45 to 46 (DS), Asp-84, and Lys-112 contribute to the 3-methyl-2-oxobutanoate site. Glu-114 is a Mg(2+) binding site. The active-site Proton acceptor is Glu-181.

Belongs to the PanB family. As to quaternary structure, homodecamer; pentamer of dimers. Requires Mg(2+) as cofactor.

It localises to the cytoplasm. It carries out the reaction 3-methyl-2-oxobutanoate + (6R)-5,10-methylene-5,6,7,8-tetrahydrofolate + H2O = 2-dehydropantoate + (6S)-5,6,7,8-tetrahydrofolate. It participates in cofactor biosynthesis; (R)-pantothenate biosynthesis; (R)-pantoate from 3-methyl-2-oxobutanoate: step 1/2. Functionally, catalyzes the reversible reaction in which hydroxymethyl group from 5,10-methylenetetrahydrofolate is transferred onto alpha-ketoisovalerate to form ketopantoate. The sequence is that of 3-methyl-2-oxobutanoate hydroxymethyltransferase from Shigella flexneri serotype 5b (strain 8401).